An 811-amino-acid polypeptide reads, in one-letter code: Transmembrane protease serine 6 (811 aa).

Positions 1 to 48 are disordered; the sequence is MPRCFQLPCSTRMPTTEVPQAADGQGDAGDGEEAAEPEGKFKPPKNTK. The Cytoplasmic portion of the chain corresponds to 1 to 59; sequence MPRCFQLPCSTRMPTTEVPQAADGQGDAGDGEEAAEPEGKFKPPKNTKRKNRDYVRFTP. Residues 8-18 show a composition bias toward polar residues; that stretch reads PCSTRMPTTEV. The helical; Signal-anchor for type II membrane protein transmembrane segment at 60-80 threads the bilayer; it reads LLLVLAALVSAGVMLWYFLGY. The Extracellular portion of the chain corresponds to 81 to 811; that stretch reads KAEVTVSQVY…VINWIQQVLT (731 aa). The SEA domain occupies 86 to 209; it reads VSQVYSGSLR…EGLVILEASV (124 aa). 6 N-linked (GlcNAc...) asparagine glycosylation sites follow: Asn138, Asn184, Asn216, Asn338, Asn433, and Asn453. CUB domains are found at residues 213 to 336 and 323 to 440; these read VVLN…QDCQ and FLLS…QISL. A disulfide bond links Cys335 and Cys366. LDL-receptor class A domains follow at residues 445 to 477, 478 to 514, and 518 to 555; these read VQVY…CDGI, KDCP…DRQP, and NGSD…DGQS. Intrachain disulfides connect Cys458–Cys470, Cys464–Cys480, Cys474–Cys489, Cys491–Cys503, Cys497–Cys516, Cys510–Cys525, Cys531–Cys543, Cys538–Cys557, Cys551–Cys566, and Cys602–Cys618. N-linked (GlcNAc...) asparagine glycosylation is present at Asn518. The 235-residue stretch at 577–811 folds into the Peptidase S1 domain; the sequence is IVGGTVSSEG…VINWIQQVLT (235 aa). Catalysis depends on charge relay system residues His617 and Asp668. Intrachain disulfides connect Cys702–Cys768, Cys733–Cys747, and Cys758–Cys787. The Charge relay system role is filled by Ser762.

This sequence belongs to the peptidase S1 family. Interacts with HJV. In terms of processing, the single-chain zymogen undergoes autoproteolytic processing. This results in TMPRSS6 shedding from the cell surface and conversion into an activated two-chains form which is released extracellularly. The process involves a trans-activation mechanism that requires TMPRSS6 oligomerization. In terms of tissue distribution, expressed at highest levels in adult mice liver, kidney and uterus. Also strongly expressed within the nasal cavity by olfactory epithelial cells. A weak, but detectable, signal in adult mice tissues analyzed including brain, lung, heart, kidney, spleen, muscle, intestine, thymus and pancreas. No signal in residual embryonic yolk sac, developing kidney tubules or in embryonic tissues analyzed including lung, heart, gastrointestinal tract and epithelium of the oral cavity.

It is found in the cell membrane. Functionally, membrane-bound serine protease. Through the cleavage of cell surface HJV, a regulator of the expression of the iron absorption-regulating hormone hepicidin/HAMP, plays a role in iron homeostasis. This chain is Transmembrane protease serine 6 (Tmprss6), found in Mus musculus (Mouse).